Here is a 103-residue protein sequence, read N- to C-terminus: Histone H4 (103 aa).

Residues 1–14 (MSGRGKGGKGLGKG) are compositionally biased toward gly residues. The interval 1-20 (MSGRGKGGKGLGKGGAKRHR) is disordered. S2 carries the post-translational modification N-acetylserine. An N6-acetyllysine modification is found at K17. A DNA-binding region spans residues 17-21 (KRHRK). At K21 the chain carries N6-methyllysine.

Belongs to the histone H4 family. In terms of assembly, the nucleosome is a histone octamer containing two molecules each of H2A, H2B, H3 and H4 assembled in one H3-H4 heterotetramer and two H2A-H2B heterodimers. The octamer wraps approximately 147 bp of DNA.

It is found in the nucleus. It localises to the chromosome. Functionally, core component of nucleosome. Nucleosomes wrap and compact DNA into chromatin, limiting DNA accessibility to the cellular machineries which require DNA as a template. Histones thereby play a central role in transcription regulation, DNA repair, DNA replication and chromosomal stability. DNA accessibility is regulated via a complex set of post-translational modifications of histones, also called histone code, and nucleosome remodeling. In Capsicum annuum (Capsicum pepper), this protein is Histone H4.